Reading from the N-terminus, the 440-residue chain is MKNITSSSTCSTGLLQLQNNLSCSELEVAEKTEQQAVGPGTIPSPWTPVNAGPPGALGSADTNGSMVDSKNLDVGDMSDDEKDLSSADAEGVWSPDIEQSFQEALSIYPPCGRRKIILSDEGKMYGRNELIARYIKLRTGKTRTRKQVSSHIQVLARRKLREIQAKIKVQFWQPGLQPSTSQDFYDYSIKPFPQPPYPAGKTSTAVSGDETGIPPSQLPWEGRAIATHKFRLLEFTAFMEIQRDEIYHRHLFVQLGGKPSFSDPLLETVDIRQIFDKFPEKSGGLKDLYEKGPQNAFYLVKCWADLNTDLTTGSETGDFYGVTSQYESNENVVLVCSTIVCSFGKQVVEKVESEYSRLENNRYVYRIQRSPMCEYMINFIQKLKNLPERYMMNSVLENFTILQVMRARETQETLLCIAYVFEVAAQNSGTTHHIYRLIKE.

Residues T32–S65 form a disordered region. A DNA-binding region (TEA) is located at residues S86–E162.

As to quaternary structure, the C-terminus of sd interacts with the C-terminal serine-rich protein domain of vg, to form a complex which acts as a selector for wing development. Interacts (via C-terminus) with yki (via N-terminus) and this interaction enhances its transcriptional activity. In terms of tissue distribution, subset of neuroblasts in the central nervous system and in the peripheral sense organs of the embryo. Expressed in the developing wing primordia initially along the D/V wing boundary, and by the late third larval instar, maximal expression is seen in cells at the D/V wing disk boundary. Less expression in cells located farther from this boundary. Also expressed in wing progenitor cells.

The protein resides in the nucleus. In terms of biological role, transcription factor which plays a key role in the Hippo/SWH (Sav/Wts/Hpo) signaling pathway, a signaling pathway that plays a pivotal role in organ size control and tumor suppression by restricting proliferation and promoting apoptosis. The core of this pathway is composed of a kinase cascade wherein Hippo (Hpo), in complex with its regulatory protein Salvador (Sav), phosphorylates and activates Warts (Wts) in complex with its regulatory protein Mats, which in turn phosphorylates and inactivates the Yorkie (Yki) oncoprotein. The Hippo/SWH signaling pathway inhibits the activity of the transcriptional complex formed by Scalloped (sd) and Yki and the target genes of this pathway include cyclin-E (cycE), diap1 and bantam. Sd promotes nuclear localization of Yki. Involved in the regulation of cell-specific gene expression during development, particularly in the differentiation of the nervous system. When in combination with vestigial (vg) it acts as a transcriptional activation complex that regulates gene expression in the wing. Binding to vg switches the DNA target selectivity of sd. Required autonomously for cell proliferation and viability within the wing blade. Required for proper sensory organ precursor (SOP) differentiation at the wing margin; required for correct expression of sens. The sequence is that of Protein scalloped (sd) from Drosophila melanogaster (Fruit fly).